Reading from the N-terminus, the 226-residue chain is Orotate phosphoribosyltransferase (226 aa).

5-phospho-alpha-D-ribose 1-diphosphate is bound by residues arginine 107, lysine 108, lysine 111, and 133–141 (EDLTTDGGS). Residue threonine 137 coordinates orotate.

Belongs to the purine/pyrimidine phosphoribosyltransferase family. PyrE subfamily. As to quaternary structure, homodimer. It depends on Mg(2+) as a cofactor.

It carries out the reaction orotidine 5'-phosphate + diphosphate = orotate + 5-phospho-alpha-D-ribose 1-diphosphate. Its pathway is pyrimidine metabolism; UMP biosynthesis via de novo pathway; UMP from orotate: step 1/2. Functionally, catalyzes the transfer of a ribosyl phosphate group from 5-phosphoribose 1-diphosphate to orotate, leading to the formation of orotidine monophosphate (OMP). The sequence is that of Orotate phosphoribosyltransferase from Dinoroseobacter shibae (strain DSM 16493 / NCIMB 14021 / DFL 12).